A 327-amino-acid chain; its full sequence is Metapyrocatechase (327 aa).

VOC domains lie at 14 to 126 (QLAH…IFFE) and 156 to 276 (RLDH…LFGD). Fe cation contacts are provided by His-159, His-221, and Glu-272.

Belongs to the extradiol ring-cleavage dioxygenase family. Requires Fe(2+) as cofactor.

The enzyme catalyses catechol + O2 = (2Z,4E)-2-hydroxy-6-oxohexa-2,4-dienoate + H(+). This is Metapyrocatechase (pheB) from Geobacillus stearothermophilus (Bacillus stearothermophilus).